The sequence spans 238 residues: Endonuclease III homolog (238 aa).

The 27-residue stretch at 129-155 folds into the HhH domain; that stretch reads REKGLPREMKDLISLPGIGNKMALLYM. Residue Lys-149 is the Nucleophile; for N-glycosylase activity of the active site. [4Fe-4S] cluster is bound by residues Cys-217, Cys-224, Cys-227, and Cys-233.

This sequence belongs to the Nth/MutY family. The cofactor is [4Fe-4S] cluster.

The protein resides in the nucleus. It is found in the mitochondrion. The enzyme catalyses 2'-deoxyribonucleotide-(2'-deoxyribose 5'-phosphate)-2'-deoxyribonucleotide-DNA = a 3'-end 2'-deoxyribonucleotide-(2,3-dehydro-2,3-deoxyribose 5'-phosphate)-DNA + a 5'-end 5'-phospho-2'-deoxyribonucleoside-DNA + H(+). Functionally, bifunctional DNA N-glycosylase with associated apurinic/apyrimidinic (AP) lyase function that catalyzes the first step in base excision repair (BER), the primary repair pathway for the repair of oxidative DNA damage. The DNA N-glycosylase activity releases the damaged DNA base from DNA by cleaving the N-glycosidic bond, leaving an AP site. The AP lyase activity cleaves the phosphodiester bond 3' to the AP site by a beta-elimination. Primarily recognizes and repairs oxidative base damage of pyrimidines. The polypeptide is Endonuclease III homolog (Encephalitozoon cuniculi (strain GB-M1) (Microsporidian parasite)).